The chain runs to 159 residues: 2-C-methyl-D-erythritol 2,4-cyclodiphosphate synthase (159 aa).

Positions 9 and 11 each coordinate a divalent metal cation. Residues Asp9 to His11 and His35 to Ser36 each bind 4-CDP-2-C-methyl-D-erythritol 2-phosphate. His43 provides a ligand contact to a divalent metal cation. 4-CDP-2-C-methyl-D-erythritol 2-phosphate-binding positions include Asp57 to Gly59, Phe62 to Asp66, Thr133 to Glu136, Phe140, and Arg143.

This sequence belongs to the IspF family. Homotrimer. A divalent metal cation serves as cofactor.

It catalyses the reaction 4-CDP-2-C-methyl-D-erythritol 2-phosphate = 2-C-methyl-D-erythritol 2,4-cyclic diphosphate + CMP. It functions in the pathway isoprenoid biosynthesis; isopentenyl diphosphate biosynthesis via DXP pathway; isopentenyl diphosphate from 1-deoxy-D-xylulose 5-phosphate: step 4/6. Its function is as follows. Involved in the biosynthesis of isopentenyl diphosphate (IPP) and dimethylallyl diphosphate (DMAPP), two major building blocks of isoprenoid compounds. Catalyzes the conversion of 4-diphosphocytidyl-2-C-methyl-D-erythritol 2-phosphate (CDP-ME2P) to 2-C-methyl-D-erythritol 2,4-cyclodiphosphate (ME-CPP) with a corresponding release of cytidine 5-monophosphate (CMP). In Shouchella clausii (strain KSM-K16) (Alkalihalobacillus clausii), this protein is 2-C-methyl-D-erythritol 2,4-cyclodiphosphate synthase.